The following is a 128-amino-acid chain: DNA-directed RNA polymerase subunit omega (128 aa).

Residues 87–106 form a disordered region; sequence ARSSQAAPKSAPGQEIGKSF.

It belongs to the RNA polymerase subunit omega family. As to quaternary structure, the RNAP catalytic core consists of 2 alpha, 1 beta, 1 beta' and 1 omega subunit. When a sigma factor is associated with the core the holoenzyme is formed, which can initiate transcription.

The enzyme catalyses RNA(n) + a ribonucleoside 5'-triphosphate = RNA(n+1) + diphosphate. In terms of biological role, promotes RNA polymerase assembly. Latches the N- and C-terminal regions of the beta' subunit thereby facilitating its interaction with the beta and alpha subunits. This chain is DNA-directed RNA polymerase subunit omega, found in Anaplasma marginale (strain St. Maries).